A 94-amino-acid polypeptide reads, in one-letter code: Small ribosomal subunit protein bS20 (94 aa).

The protein belongs to the bacterial ribosomal protein bS20 family.

Its function is as follows. Binds directly to 16S ribosomal RNA. This Aquifex aeolicus (strain VF5) protein is Small ribosomal subunit protein bS20.